The primary structure comprises 2293 residues: Protein Ycf2 (2293 aa).

1642–1649 (GSIGTGRS) serves as a coordination point for ATP.

Belongs to the Ycf2 family.

It localises to the plastid. The protein resides in the chloroplast stroma. Probable ATPase of unknown function. Its presence in a non-photosynthetic plant (Epifagus virginiana) and experiments in tobacco indicate that it has an essential function which is probably not related to photosynthesis. This chain is Protein Ycf2, found in Platanus occidentalis (Sycamore).